Reading from the N-terminus, the 307-residue chain is Homoserine O-acetyltransferase (307 aa).

The Acyl-thioester intermediate role is filled by Cys142. Residues Lys163 and Ser192 each coordinate substrate. The active-site Proton acceptor is His235. Glu237 is an active-site residue. Arg249 is a binding site for substrate.

Belongs to the MetA family.

It is found in the cytoplasm. The catalysed reaction is L-homoserine + acetyl-CoA = O-acetyl-L-homoserine + CoA. It functions in the pathway amino-acid biosynthesis; L-methionine biosynthesis via de novo pathway; O-acetyl-L-homoserine from L-homoserine: step 1/1. In terms of biological role, transfers an acetyl group from acetyl-CoA to L-homoserine, forming acetyl-L-homoserine. This Desulfitobacterium hafniense (strain DSM 10664 / DCB-2) protein is Homoserine O-acetyltransferase.